Reading from the N-terminus, the 782-residue chain is Gelsolin (782 aa).

Residues 1–27 form the signal peptide; the sequence is MAPHRPAPALLCALSLALCALSLPVRA. An actin-severing region spans residues 53–176; the sequence is VVEHPEFLKA…YKKGGVASGF (124 aa). The stretch at 76–158 is one Gelsolin-like 1 repeat; the sequence is FDLVPVPTNL…VQGFESATFL (83 aa). Tyr86 carries the phosphotyrosine; by SRC; in vitro modification. The Ca(2+) site is built by Gly92, Asp93, Glu124, Asp136, Gly141, and Ala143. The segment at 123–126 is actin-actin interfilament contact point; it reads DESG. 162 to 169 serves as a coordination point for a 1,2-diacyl-sn-glycero-3-phospho-(1D-myo-inositol-4,5-bisphosphate); sequence KSGLKYKK. Val172 contributes to the Ca(2+) binding site. An a 1,2-diacyl-sn-glycero-3-phospho-(1D-myo-inositol-4,5-bisphosphate)-binding site is contributed by 188 to 196; it reads RLFQVKGRR. Residues 198–270 form a Gelsolin-like 2 repeat; sequence VRATEVPVSW…SEEGTEPEAM (73 aa). Ca(2+)-binding residues include Gly213 and Asp214. A disulfide bridge connects residues Cys215 and Cys228. Position 236 (Glu236) interacts with Ca(2+). The segment covering 247 to 262 has biased composition (basic and acidic residues); the sequence is IRDNERSGRARVHVSE. The interval 247-285 is disordered; it reads IRDNERSGRARVHVSEEGTEPEAMLQVLGPKPALPAGTE. Positions 286, 329, 330, and 354 each coordinate Ca(2+). The Gelsolin-like 3 repeat unit spans residues 317-389; sequence DENPFAQGAL…LPEGGETPLF (73 aa). Tyr409 carries the phosphotyrosine; by SRC; in vitro modification. The actin-binding, Ca-sensitive stretch occupies residues 434-782; that stretch reads AAQHGMDDDG…LDRAMAELAA (349 aa). The stretch at 455 to 536 is one Gelsolin-like 4 repeat; it reads SNKVPVDPAT…VQGKEPAHLM (82 aa). At Tyr465 the chain carries Phosphotyrosine; by SRC. The Ca(2+) site is built by Gly471, Asp472, Glu502, Asp514, Gly519, Pro521, and Thr551. The Gelsolin-like 5 repeat unit spans residues 576 to 642; sequence TRAVEVLPKA…AEGSEPDGFW (67 aa). At Lys584 the chain carries N6-acetyllysine. Ca(2+) contacts are provided by Asn591 and Asp592. Phosphotyrosine; by SRC; in vitro is present on Tyr603. Glu614 contacts Ca(2+). A Phosphotyrosine; by SRC; in vitro modification is found at Tyr651. Residues 681–756 form a Gelsolin-like 6 repeat; sequence IEEVPGELMQ…VKQGFEPPSF (76 aa). Ca(2+)-binding residues include Asp696, Asp697, and Glu719. Thr742 bears the Phosphothreonine mark.

It belongs to the villin/gelsolin family. Binds to actin and to fibronectin. Identified in a complex composed of ACTA1, COBL, GSN and TMSB4X. Interacts with the inactive form of EIF2AK2/PKR. Interacts with FLII. In terms of processing, phosphorylation on Tyr-86, Tyr-409, Tyr-465, Tyr-603 and Tyr-651 in vitro is induced in presence of phospholipids. As to expression, phagocytic cells, platelets, fibroblasts, nonmuscle cells, smooth and skeletal muscle cells.

Its subcellular location is the cytoplasm. The protein resides in the cytoskeleton. The protein localises to the secreted. Its function is as follows. Calcium-regulated, actin-modulating protein that binds to the plus (or barbed) ends of actin monomers or filaments, preventing monomer exchange (end-blocking or capping). It can promote the assembly of monomers into filaments (nucleation) as well as sever filaments already formed. Plays a role in ciliogenesis. In Homo sapiens (Human), this protein is Gelsolin (GSN).